We begin with the raw amino-acid sequence, 478 residues long: Vitronectin (478 aa).

The first 19 residues, 1 to 19 (MAPLRPLLILALLAWVALA), serve as a signal peptide directing secretion. Positions 20 to 63 (DQESCKGRCTEGFNVDKKCQCDELCSYYQSCCTDYTAECKPQVT) constitute an SMB domain. Cystine bridges form between Cys-24/Cys-28, Cys-24/Cys-40, Cys-28/Cys-58, Cys-38/Cys-40, Cys-38/Cys-51, Cys-44/Cys-50, and Cys-51/Cys-58. The short motif at 64–66 (RGD) is the Cell attachment site element. A Phosphothreonine; by CK2; in vitro modification is found at Thr-69. Sulfotyrosine is present on Tyr-75. Position 76 is a phosphothreonine; by CK2; in vitro (Thr-76). At Tyr-78 the chain carries Sulfotyrosine. Asn-86 is a glycosylation site (N-linked (GlcNAc...) (complex) asparagine). Positions 91 to 158 (EQVGGPSLTS…PPAEEELCSG (68 aa)) are disordered. Polar residues predominate over residues 97–112 (SLTSDLQAQSKGNPEQ). Phosphoserine occurs at positions 130 and 137. A compositionally biased stretch (basic and acidic residues) spans 133–143 (EGIDSRPETLH). Hemopexin repeat units lie at residues 158–202 (GKPF…VWGI), 203–250 (EGPI…FDGI), and 251–305 (PDNV…FEHF). N-linked (GlcNAc...) asparagine glycosylation is present at Asn-169. N-linked (GlcNAc...) (complex) asparagine glycosylation is present at Asn-242. Tyr-282 carries the sulfotyrosine modification. Cys-293 and Cys-430 are disulfide-bonded. Ser-312 is subject to Phosphoserine. The tract at residues 362–395 (RPSLAKKQRFRHRNRKGYRSQRGHSRGRNQNSRR) is heparin-binding. The disordered stretch occupies residues 364–398 (SLAKKQRFRHRNRKGYRSQRGHSRGRNQNSRRPSR). The span at 365–388 (LAKKQRFRHRNRKGYRSQRGHSRG) shows a compositional bias: basic residues. A Phosphoserine; by PKA modification is found at Ser-397. Residues Tyr-417 and Tyr-420 each carry the sulfotyrosine modification. The stretch at 419–472 (DYRMDWLVPATCEPIQSVFFFSGDKYYRVNLRTRRVDTVDPPYPRSIAQYWLGC) is one Hemopexin 4 repeat.

Exists in two forms: a single chain 75 kDa form (V75) and a clipped form composed of two chains (65 kDa and 10 kDa) (V65+V10) which are held together by a disulfide bond. Interacts with SERPINE1/PAI1, insulin and C1QBP. As to quaternary structure, (Microbial infection) Interacts (via hemopexin repeat 2) with P.falciparum (isolate CDC / Honduras) SERA5 P47 (via C-terminus); may form heterotetramers of two VTN and SERA5 P47 heterodimers; the interaction may protect merozoites from phagocytosis by host monocytes; VTN glycosylation appears to be dispensable for the interaction. Sulfated on tyrosine residues. In terms of processing, N- and O-glycosylated. Post-translationally, phosphorylation on Thr-69 and Thr-76 favors cell adhesion and spreading. It has been suggested that the active SMB domain may be permitted considerable disulfide bond heterogeneity or variability, thus two alternate disulfide patterns based on 3D structures are described with 1 disulfide bond conserved in both. In terms of processing, phosphorylation sites are present in the extracellular medium. Expressed in the retina pigment epithelium (at protein level). Expressed in plasma (at protein level). Expressed in serum (at protein level).

The protein localises to the secreted. It is found in the extracellular space. Its subcellular location is the parasitophorous vacuole. Its function is as follows. Vitronectin is a cell adhesion and spreading factor found in serum and tissues. Vitronectin interact with glycosaminoglycans and proteoglycans. Is recognized by certain members of the integrin family and serves as a cell-to-substrate adhesion molecule. Inhibitor of the membrane-damaging effect of the terminal cytolytic complement pathway. Functionally, somatomedin-B is a growth hormone-dependent serum factor with protease-inhibiting activity. In Homo sapiens (Human), this protein is Vitronectin (VTN).